We begin with the raw amino-acid sequence, 154 residues long: MRILGIDPGLARVGYGVIDTSGGQQRMLDCGIIRTEPGYSEGDRMVVIASDLRQLIRAWRPELAAVEKFFFYRSSTTISVVQARGVVMMTLARFKVPVVEFPPMQIKLALAGFGHAEKDEVLEAVMRELNLTDPPRPDDAADALAVALTGWFQR.

Catalysis depends on residues Asp7, Glu67, and Asp139. The Mg(2+) site is built by Asp7, Glu67, and Asp139.

This sequence belongs to the RuvC family. In terms of assembly, homodimer which binds Holliday junction (HJ) DNA. The HJ becomes 2-fold symmetrical on binding to RuvC with unstacked arms; it has a different conformation from HJ DNA in complex with RuvA. In the full resolvosome a probable DNA-RuvA(4)-RuvB(12)-RuvC(2) complex forms which resolves the HJ. Requires Mg(2+) as cofactor.

Its subcellular location is the cytoplasm. It catalyses the reaction Endonucleolytic cleavage at a junction such as a reciprocal single-stranded crossover between two homologous DNA duplexes (Holliday junction).. In terms of biological role, the RuvA-RuvB-RuvC complex processes Holliday junction (HJ) DNA during genetic recombination and DNA repair. Endonuclease that resolves HJ intermediates. Cleaves cruciform DNA by making single-stranded nicks across the HJ at symmetrical positions within the homologous arms, yielding a 5'-phosphate and a 3'-hydroxyl group; requires a central core of homology in the junction. The consensus cleavage sequence is 5'-(A/T)TT(C/G)-3'. Cleavage occurs on the 3'-side of the TT dinucleotide at the point of strand exchange. HJ branch migration catalyzed by RuvA-RuvB allows RuvC to scan DNA until it finds its consensus sequence, where it cleaves and resolves the cruciform DNA. The chain is Crossover junction endodeoxyribonuclease RuvC from Synechococcus sp. (strain CC9902).